Here is a 222-residue protein sequence, read N- to C-terminus: Phosphoglycolate phosphatase (222 aa).

D8 serves as the catalytic Nucleophile. The Mg(2+) site is built by D8 and D10. K150 contributes to the substrate binding site. D173 and D177 together coordinate Mg(2+).

The protein belongs to the archaeal SPP-like hydrolase family. Mg(2+) is required as a cofactor.

The catalysed reaction is 2-phosphoglycolate + H2O = glycolate + phosphate. In terms of biological role, catalyzes the dephosphorylation of 2-phosphoglycolate. This Metallosphaera sedula (strain ATCC 51363 / DSM 5348 / JCM 9185 / NBRC 15509 / TH2) protein is Phosphoglycolate phosphatase.